The sequence spans 338 residues: Lipoate-protein ligase A (338 aa).

The BPL/LPL catalytic domain maps to 29–216 (PATQRVLFLW…AFFSHYGERV (188 aa)). Residues Arg71, 76–79 (GAVF), and Lys134 contribute to the ATP site. (R)-lipoate is bound at residue Lys134.

Belongs to the LplA family. In terms of assembly, monomer.

It is found in the cytoplasm. The enzyme catalyses L-lysyl-[lipoyl-carrier protein] + (R)-lipoate + ATP = N(6)-[(R)-lipoyl]-L-lysyl-[lipoyl-carrier protein] + AMP + diphosphate + H(+). It functions in the pathway protein modification; protein lipoylation via exogenous pathway; protein N(6)-(lipoyl)lysine from lipoate: step 1/2. It participates in protein modification; protein lipoylation via exogenous pathway; protein N(6)-(lipoyl)lysine from lipoate: step 2/2. Functionally, catalyzes both the ATP-dependent activation of exogenously supplied lipoate to lipoyl-AMP and the transfer of the activated lipoyl onto the lipoyl domains of lipoate-dependent enzymes. The polypeptide is Lipoate-protein ligase A (Klebsiella pneumoniae (strain 342)).